Consider the following 463-residue polypeptide: SCF E3 ubiquitin ligase complex F-box protein pof2 (463 aa).

The F-box domain occupies 1–42 (MRVPNEVCFNILSYLEADELRCKSTVCTSWRNFIIPTLWEKV). LRR repeat units lie at residues 145–170 (CPNL…IIKR), 171–196 (CPYL…LSEK), 198–220 (DLIE…SRLV), 225–247 (GLKE…LNLN), 249–271 (ELDA…DIEL), 278–299 (KLNS…LSLT), 304–326 (SLTT…CLLK), 328–353 (CKNI…IAKL), 354–378 (PYLQ…LSGS), and 380–405 (SRNL…LMYN).

As to quaternary structure, part of a SCF E3 ubiquitin ligase complex. Interacts with skp1.

Its subcellular location is the mitochondrion. Its function is as follows. Involved in substrate recognition in ubiquitin-dependent degradation. The protein is SCF E3 ubiquitin ligase complex F-box protein pof2 (pof2) of Schizosaccharomyces pombe (strain 972 / ATCC 24843) (Fission yeast).